The following is a 251-amino-acid chain: Putative glutamine amidotransferase YLR126C (251 aa).

In terms of domain architecture, Glutamine amidotransferase type-1 spans 48–232 (EVFHVQKNVF…NRYERQCQEL (185 aa)). Residues Cys112, His198, and Glu200 each act as for GATase activity in the active site.

It is found in the cytoplasm. Its function is as follows. May have a role in copper and iron homeostasis. This chain is Putative glutamine amidotransferase YLR126C, found in Saccharomyces cerevisiae (strain ATCC 204508 / S288c) (Baker's yeast).